The sequence spans 76 residues: Exodeoxyribonuclease 7 small subunit (76 aa).

This sequence belongs to the XseB family. Heterooligomer composed of large and small subunits.

The protein resides in the cytoplasm. It carries out the reaction Exonucleolytic cleavage in either 5'- to 3'- or 3'- to 5'-direction to yield nucleoside 5'-phosphates.. In terms of biological role, bidirectionally degrades single-stranded DNA into large acid-insoluble oligonucleotides, which are then degraded further into small acid-soluble oligonucleotides. This chain is Exodeoxyribonuclease 7 small subunit, found in Lactiplantibacillus plantarum (strain ATCC BAA-793 / NCIMB 8826 / WCFS1) (Lactobacillus plantarum).